We begin with the raw amino-acid sequence, 347 residues long: GMP reductase (347 aa).

Residue 108–131 coordinates NADP(+); that stretch reads ADFVKMQQILALSPGLKFICIDVA. K(+)-binding residues include G181 and G183. C186 serves as the catalytic Thioimidate intermediate. 216-239 provides a ligand contact to NADP(+); sequence IVSDGGCSVPGDVAKAFGGGADFV.

Belongs to the IMPDH/GMPR family. GuaC type 1 subfamily. In terms of assembly, homotetramer.

It carries out the reaction IMP + NH4(+) + NADP(+) = GMP + NADPH + 2 H(+). Its function is as follows. Catalyzes the irreversible NADPH-dependent deamination of GMP to IMP. It functions in the conversion of nucleobase, nucleoside and nucleotide derivatives of G to A nucleotides, and in maintaining the intracellular balance of A and G nucleotides. The protein is GMP reductase of Serratia proteamaculans (strain 568).